The primary structure comprises 506 residues: Vinckepain-1 (506 aa).

Residues 1 to 32 lie on the Cytoplasmic side of the membrane; the sequence is MSDNIGQINFTIPGIQSLDENDTYLKINHKKT. Residues 1–262 constitute a propeptide, activation peptide; the sequence is MSDNIGQINF…LISVDNKSKD (262 aa). Residues 33–53 form a helical; Signal-anchor for type II membrane protein membrane-spanning segment; sequence IKICAYAITAIALFFIGGVFF. The Lumenal portion of the chain corresponds to 54–506; the sequence is KNQAKINALD…VGSDVFFPIY (453 aa). N-linked (GlcNAc...) asparagine glycans are attached at residues Asn133 and Asn258. 4 disulfide bridges follow: Cys284-Cys326, Cys319-Cys359, Cys344-Cys364, and Cys413-Cys495. The active site involves Cys287. Residue Asn418 is glycosylated (N-linked (GlcNAc...) asparagine). Residues His419 and Asn470 contribute to the active site.

The protein belongs to the peptidase C1 family.

Its subcellular location is the membrane. Cysteine protease. The chain is Vinckepain-1 from Plasmodium vinckei.